A 493-amino-acid chain; its full sequence is MEKKLKSWQGWLLSGGSMVVVFVLGLCVSALMERRAEVASIFNNRKTVIKGIEARNELFKDDFPREYQTWTETAKTDFESEFNGNVAVDALEKRPEMVILWAGYAFSKDYSTPRGHMHAIEDITASLRTGSPAGPHDGPQPSTCWTCKSPDVPRMMEALGVDSFYNNKWAAFGDEIVNPIGCSDCHDPETMNLHISRPALIEAFQRQGKDITKATPQEMRSLVCAQCHVEYYFKGDGKYLTFPWDKGFTVEDMEAYYDEAGFYDYIHKLSRTPILKAQHPDYEIAQMGIHGQRGVSCADCHMPYKSEGGVKFSDHHIQSPLAMIDRTCQTCHRESEETLRNNVYERQRKANEIRNRLEQELAKAHIEAKFAWDKGATEDQMKDVLALIRQAQWRWDFGVASHGGSFHAPQEIQRILSHGLDRAMQARLAVSKVLAKHGYTEDVPMPDISTKAKAQEYIGLDMDAERAAKEKFLKTTVPAWLEKAKANGRLAQK.

Positions 1–25 are cleaved as a signal peptide; the sequence is MEKKLKSWQGWLLSGGSMVVVFVLG. Heme c is bound at residue H116. Heme contacts are provided by C144, C147, and K148. The heme c site is built by C182, C185, H186, C224, C227, and H228. Residues E230, Y231, K276, and Q278 each coordinate Ca(2+). A substrate-binding site is contributed by Y231. H279 lines the substrate pocket. Residues H290, C297, C300, H301, H315, C328, C331, H332, and H407 each coordinate heme c.

It belongs to the cytochrome c-552 family. Ca(2+) serves as cofactor. It depends on heme c as a cofactor.

The protein localises to the periplasm. It catalyses the reaction 6 Fe(III)-[cytochrome c] + NH4(+) + 2 H2O = 6 Fe(II)-[cytochrome c] + nitrite + 8 H(+). The protein operates within nitrogen metabolism; nitrate reduction (assimilation). In terms of biological role, catalyzes the reduction of nitrite to ammonia, consuming six electrons in the process. This is Cytochrome c-552 from Bacteroides thetaiotaomicron (strain ATCC 29148 / DSM 2079 / JCM 5827 / CCUG 10774 / NCTC 10582 / VPI-5482 / E50).